An 825-amino-acid polypeptide reads, in one-letter code: Probable inorganic carbon transporter subunit DabA (825 aa).

Zn(2+)-binding residues include Cys334, Asp336, His521, and Cys536.

It belongs to the inorganic carbon transporter (TC 9.A.2) DabA family. In terms of assembly, forms a complex with DabB. Zn(2+) serves as cofactor.

The protein localises to the cell inner membrane. Part of an energy-coupled inorganic carbon pump. In Acidithiobacillus ferrooxidans (strain ATCC 53993 / BNL-5-31) (Leptospirillum ferrooxidans (ATCC 53993)), this protein is Probable inorganic carbon transporter subunit DabA.